Consider the following 685-residue polypeptide: Protein snwA (685 aa).

Disordered stretches follow at residues 1–62 (MTSL…GYLP), 88–112 (RKGKSKSSNSNTSNMNGGGTTTSIV), 347–573 (LAED…DSIY), and 605–685 (AVSN…SKKR). Low complexity-rich tracts occupy residues 30–41 (PQQQKQQQQQQQ) and 93–102 (KSSNSNTSNM). Residues 194–360 (ATYIKYTPSN…VRNERSGIIQ (167 aa)) are SNW. Acidic residues predominate over residues 370–381 (DSDNDNDNDSSS). A compositionally biased stretch (basic and acidic residues) spans 399 to 494 (RSTERIPSRN…DRYSKRRSDS (96 aa)). Residues 495–507 (DSDSDSDSSDSED) show a composition bias toward acidic residues. Over residues 508-556 (ERVRRERKEKLERDKIRMEKKRELEREYRLEASGKKSKFNRDQDRDISE) the composition is skewed to basic and acidic residues. Over residues 618–631 (EDNTSIQDVLSNSR) the composition is skewed to polar residues. Positions 646–685 (PNKEFSGTDRSKDRTGPVAFEKEKKKSDDPFGFDDFSKKR) are enriched in basic and acidic residues.

This sequence belongs to the SNW family. Interacts with cypE.

Its subcellular location is the nucleus. This is Protein snwA (snwA) from Dictyostelium discoideum (Social amoeba).